We begin with the raw amino-acid sequence, 205 residues long: ATP-dependent Clp protease proteolytic subunit (205 aa).

S98 serves as the catalytic Nucleophile. Residue H123 is part of the active site.

The protein belongs to the peptidase S14 family. As to quaternary structure, fourteen ClpP subunits assemble into 2 heptameric rings which stack back to back to give a disk-like structure with a central cavity, resembling the structure of eukaryotic proteasomes.

It is found in the cytoplasm. The catalysed reaction is Hydrolysis of proteins to small peptides in the presence of ATP and magnesium. alpha-casein is the usual test substrate. In the absence of ATP, only oligopeptides shorter than five residues are hydrolyzed (such as succinyl-Leu-Tyr-|-NHMec, and Leu-Tyr-Leu-|-Tyr-Trp, in which cleavage of the -Tyr-|-Leu- and -Tyr-|-Trp bonds also occurs).. Functionally, cleaves peptides in various proteins in a process that requires ATP hydrolysis. Has a chymotrypsin-like activity. Plays a major role in the degradation of misfolded proteins. This chain is ATP-dependent Clp protease proteolytic subunit, found in Desulfosudis oleivorans (strain DSM 6200 / JCM 39069 / Hxd3) (Desulfococcus oleovorans).